We begin with the raw amino-acid sequence, 563 residues long: Urocanate hydratase (563 aa).

NAD(+)-binding positions include 53–54 (GG), glutamine 131, 177–179 (GMG), glutamate 197, arginine 202, 243–244 (NA), 264–268 (QTSAH), 274–275 (YL), and tyrosine 323. Cysteine 411 is a catalytic residue. Glycine 493 serves as a coordination point for NAD(+).

This sequence belongs to the urocanase family. Requires NAD(+) as cofactor.

It is found in the cytoplasm. The catalysed reaction is 4-imidazolone-5-propanoate = trans-urocanate + H2O. Its pathway is amino-acid degradation; L-histidine degradation into L-glutamate; N-formimidoyl-L-glutamate from L-histidine: step 2/3. Catalyzes the conversion of urocanate to 4-imidazolone-5-propionate. In Yersinia pestis bv. Antiqua (strain Antiqua), this protein is Urocanate hydratase.